Reading from the N-terminus, the 288-residue chain is Phosphatidylserine decarboxylase proenzyme (288 aa).

Active-site charge relay system; for autoendoproteolytic cleavage activity residues include aspartate 95, histidine 152, and serine 255. The active-site Schiff-base intermediate with substrate; via pyruvic acid; for decarboxylase activity is the serine 255. At serine 255 the chain carries Pyruvic acid (Ser); by autocatalysis.

The protein belongs to the phosphatidylserine decarboxylase family. PSD-B subfamily. Prokaryotic type I sub-subfamily. As to quaternary structure, heterodimer of a large membrane-associated beta subunit and a small pyruvoyl-containing alpha subunit. Pyruvate is required as a cofactor. Is synthesized initially as an inactive proenzyme. Formation of the active enzyme involves a self-maturation process in which the active site pyruvoyl group is generated from an internal serine residue via an autocatalytic post-translational modification. Two non-identical subunits are generated from the proenzyme in this reaction, and the pyruvate is formed at the N-terminus of the alpha chain, which is derived from the carboxyl end of the proenzyme. The autoendoproteolytic cleavage occurs by a canonical serine protease mechanism, in which the side chain hydroxyl group of the serine supplies its oxygen atom to form the C-terminus of the beta chain, while the remainder of the serine residue undergoes an oxidative deamination to produce ammonia and the pyruvoyl prosthetic group on the alpha chain. During this reaction, the Ser that is part of the protease active site of the proenzyme becomes the pyruvoyl prosthetic group, which constitutes an essential element of the active site of the mature decarboxylase.

It localises to the cell membrane. It catalyses the reaction a 1,2-diacyl-sn-glycero-3-phospho-L-serine + H(+) = a 1,2-diacyl-sn-glycero-3-phosphoethanolamine + CO2. The protein operates within phospholipid metabolism; phosphatidylethanolamine biosynthesis; phosphatidylethanolamine from CDP-diacylglycerol: step 2/2. Its function is as follows. Catalyzes the formation of phosphatidylethanolamine (PtdEtn) from phosphatidylserine (PtdSer). This chain is Phosphatidylserine decarboxylase proenzyme, found in Methylococcus capsulatus (strain ATCC 33009 / NCIMB 11132 / Bath).